The sequence spans 219 residues: Orotate phosphoribosyltransferase (219 aa).

K26 contacts 5-phospho-alpha-D-ribose 1-diphosphate. Residue 34 to 35 (FF) coordinates orotate. 5-phospho-alpha-D-ribose 1-diphosphate-binding positions include 72–73 (YK), R98, K99, K102, H104, and 124–132 (DDVITAGTA). Positions 128 and 156 each coordinate orotate.

This sequence belongs to the purine/pyrimidine phosphoribosyltransferase family. PyrE subfamily. As to quaternary structure, homodimer. Mg(2+) is required as a cofactor.

The catalysed reaction is orotidine 5'-phosphate + diphosphate = orotate + 5-phospho-alpha-D-ribose 1-diphosphate. It functions in the pathway pyrimidine metabolism; UMP biosynthesis via de novo pathway; UMP from orotate: step 1/2. Its function is as follows. Catalyzes the transfer of a ribosyl phosphate group from 5-phosphoribose 1-diphosphate to orotate, leading to the formation of orotidine monophosphate (OMP). This Xanthomonas oryzae pv. oryzae (strain MAFF 311018) protein is Orotate phosphoribosyltransferase.